Consider the following 336-residue polypeptide: Eukaryotic translation initiation factor 3 subunit I (336 aa).

WD repeat units lie at residues 8–47 (GHER…RLGT), 50–91 (GHLG…KVWE), 146–185 (CNES…QLEN), 190–229 (EFDH…ILKT), and 287–326 (GHFG…FDFM).

It belongs to the eIF-3 subunit I family. As to quaternary structure, component of the eukaryotic translation initiation factor 3 (eIF-3) complex.

It localises to the cytoplasm. Functionally, component of the eukaryotic translation initiation factor 3 (eIF-3) complex, which is involved in protein synthesis of a specialized repertoire of mRNAs and, together with other initiation factors, stimulates binding of mRNA and methionyl-tRNAi to the 40S ribosome. The eIF-3 complex specifically targets and initiates translation of a subset of mRNAs involved in cell proliferation. The chain is Eukaryotic translation initiation factor 3 subunit I (tif34) from Aspergillus terreus (strain NIH 2624 / FGSC A1156).